Reading from the N-terminus, the 226-residue chain is Cytidylate kinase (226 aa).

Position 10–18 (10–18) interacts with ATP; that stretch reads GPAGAGKST.

It belongs to the cytidylate kinase family. Type 1 subfamily.

It is found in the cytoplasm. The enzyme catalyses CMP + ATP = CDP + ADP. It catalyses the reaction dCMP + ATP = dCDP + ADP. The sequence is that of Cytidylate kinase from Caldicellulosiruptor bescii (strain ATCC BAA-1888 / DSM 6725 / KCTC 15123 / Z-1320) (Anaerocellum thermophilum).